We begin with the raw amino-acid sequence, 516 residues long: MTDWTERYRPTTLSAVRGNNAARDEFIEWAESWDDHHESVVLHGAPGVGKTSAAHALASDMGWETVELNASDQRTSDVIERLAGRAAKNATLAGAVSGTTSTRQLIIMDEADNIHYQYDRGGKQAVTTLLKDANQPIVLIANEYYDMSRGLRNAAQDIEFRDISARSIVPVLRNILRKENIEFEEAALKQIAEVNSGDLRAAIKDLQTTVEGSDRITVDDVKTGGRDRAMGLFSFLDSVLKEDAAEEALQNSYDVDETPDDLLKWVEDKVPLVYDDAELARAYEFLSNADIWTNRVYATDYNYRWWRYATDNLAGGVAAARETQRGGWTRYGGAPYRSTRDSTRDTVVREVAKTGGFSMATARTAVIPFLSAITHLCKPRSLTVGMAAWYELDEAGVSYITGSGETTKKVASIVEDAAERRSEAVEAHAGSAFAETETEEKTNFTGNQDSDVDVQSHKSAESGDDTVRTANTPAEDHAQSGASETASATESASDSDASTDTDADDDDGQAGLSEFM.

Gly-44–Thr-51 is an ATP binding site. Residues Arg-421–Met-516 are disordered. Basic and acidic residues predominate over residues Val-454–Val-467. Positions Gln-479–Asp-496 are enriched in low complexity. Positions Ala-497 to Gly-508 are enriched in acidic residues.

This sequence belongs to the activator 1 small subunits family. RfcL subfamily. In terms of assembly, heteromultimer composed of small subunits (RfcS) and large subunits (RfcL).

In terms of biological role, part of the RFC clamp loader complex which loads the PCNA sliding clamp onto DNA. In Haloquadratum walsbyi (strain DSM 16790 / HBSQ001), this protein is Replication factor C large subunit.